A 1251-amino-acid chain; its full sequence is Phospholipid-transporting ATPase IC (1251 aa).

The interval 1–54 (MSTERDSETTFDEDSQPNDEVVPYSDDETEDELDDQGSAVEPEQNRVNREAEEN) is disordered. The Cytoplasmic segment spans residues 1 to 108 (MSTERDSETT…TYKYNAFTFI (108 aa)). Acidic residues predominate over residues 25 to 35 (SDDETEDELDD). A compositionally biased stretch (basic and acidic residues) spans 43 to 54 (EQNRVNREAEEN). Residues 109-130 (PMNLFEQFKRAANLYFLALLIL) traverse the membrane as a helical segment. The Exoplasmic loop segment spans residues 131–136 (QAVPQI). The helical transmembrane segment at 137–156 (STLAWYTTLVPLLVVLGVTA) threads the bilayer. Residues 157-340 (IKDLVDDVAR…TKIDYLMNYM (184 aa)) lie on the Cytoplasmic side of the membrane. The helical transmembrane segment at 341-362 (VYTIFVVLILLSAGLAIGHAYW) threads the bilayer. The Exoplasmic loop segment spans residues 363-389 (EAQVGNSSWYLYDGEDDTPSYRGFLIF). A helical membrane pass occupies residues 390–411 (WGYIIVLNTMVPISLYVSVEVI). Over 412-949 (RLGQSHFINW…GRWSYIRMCK (538 aa)) the chain is Cytoplasmic. Asp454 acts as the 4-aspartylphosphate intermediate in catalysis. 12 residues coordinate ATP: Asp454, Lys455, Thr456, Glu555, Phe596, Lys619, Arg652, Thr732, Gly733, Asp734, Arg867, and Lys873. Position 454 (Asp454) interacts with Mg(2+). Thr456 serves as a coordination point for Mg(2+). Asp893 is a Mg(2+) binding site. Positions 896 and 897 each coordinate ATP. Asp897 provides a ligand contact to Mg(2+). The chain crosses the membrane as a helical span at residues 950 to 970 (FLRYFFYKNFAFTLVHFWYSF). The Exoplasmic loop portion of the chain corresponds to 971-982 (FNGYSAQTAYED). The chain crosses the membrane as a helical span at residues 983–1002 (WFITLYNVLYTSLPVLLMGL). Over 1003–1032 (LDQDVSDKLSLRFPGLYIVGQRDLLFNYKR) the chain is Cytoplasmic. The helical transmembrane segment at 1033 to 1054 (FFVSLLHGVLTSMILFFIPLGA) threads the bilayer. Over 1055–1068 (YLQTVGQDGEAPSD) the chain is Exoplasmic loop. The chain crosses the membrane as a helical span at residues 1069–1091 (YQSFAVTIASALVITVNFQIGLD). Residues 1092-1097 (TSYWTF) lie on the Cytoplasmic side of the membrane. A helical transmembrane segment spans residues 1098–1118 (VNAFSIFGSIALYFGIMFDFH). Topologically, residues 1119-1138 (SAGIHVLFPSAFQFTGTASN) are exoplasmic loop. Residues 1139–1163 (ALRQPYIWLTIILAVAVCLLPVVAI) traverse the membrane as a helical segment. The Cytoplasmic segment spans residues 1164-1251 (RFLSMTIWPS…TAEYRRTGDS (88 aa)). Ser1223 carries the post-translational modification Phosphoserine.

This sequence belongs to the cation transport ATPase (P-type) (TC 3.A.3) family. Type IV subfamily. In terms of assembly, component of a P4-ATPase flippase complex which consists of a catalytic alpha subunit ATP8B1 and an accessory beta subunit TMEM30A. The flippase ATP8B1:TMEM30A complex can form an intermediate phosphoenzyme in vitro. Also interacts with beta subunit TMEM30B. Requires Mg(2+) as cofactor. In terms of tissue distribution, found in most tissues except brain and skeletal muscle. Most abundant in pancreas and small intestine.

The protein resides in the cell membrane. Its subcellular location is the apical cell membrane. It is found in the cell projection. The protein localises to the stereocilium. It localises to the endoplasmic reticulum. The protein resides in the golgi apparatus. It catalyses the reaction ATP + H2O + phospholipidSide 1 = ADP + phosphate + phospholipidSide 2.. It carries out the reaction a 1,2-diacyl-sn-glycero-3-phosphocholine(out) + ATP + H2O = a 1,2-diacyl-sn-glycero-3-phosphocholine(in) + ADP + phosphate + H(+). The catalysed reaction is a 1,2-diacyl-sn-glycero-3-phospho-L-serine(out) + ATP + H2O = a 1,2-diacyl-sn-glycero-3-phospho-L-serine(in) + ADP + phosphate + H(+). In terms of biological role, catalytic component of a P4-ATPase flippase complex which catalyzes the hydrolysis of ATP coupled to the transport of phospholipids, in particular phosphatidylcholines (PC), from the outer to the inner leaflet of the plasma membrane. May participate in the establishment of the canalicular membrane integrity by ensuring asymmetric distribution of phospholipids in the canicular membrane. Thus may have a role in the regulation of bile acids transport into the canaliculus, uptake of bile acids from intestinal contents into intestinal mucosa or both and protect hepatocytes from bile salts. Involved in the microvillus formation in polarized epithelial cells; the function seems to be independent from its flippase activity. Participates in correct apical membrane localization of CDC42, CFTR and SLC10A2. Enables CDC42 clustering at the apical membrane during enterocyte polarization through the interaction between CDC42 polybasic region and negatively charged membrane lipids provided by ATP8B1. Together with TMEM30A is involved in uptake of the synthetic drug alkylphospholipid perifosine. Required for the preservation of cochlear hair cells in the inner ear. May act as cardiolipin transporter during inflammatory injury. This chain is Phospholipid-transporting ATPase IC, found in Homo sapiens (Human).